Here is a 267-residue protein sequence, read N- to C-terminus: REH2-associated factor 2 (267 aa).

In terms of assembly, component of the REH2-associated complex (REH2C) composed of helicase REH2, associated factors H2F1 and H2F2, and mRNAs at various editing stages; the formation of the complex is RNA-independent. Interacts with various editing complexes including the RNA editing core (RECC) complex, the gRNA-binding (GRBC) complex (also known as the MRB1 complex) and the RNA editing mediator (REMC) complex.

The protein localises to the mitochondrion. Its function is as follows. May play a role in mitochondrial mRNA editing by facilitating the association of the gRNA-binding (GRBC) complex with the RNA editing core (RECC) complex. However, appears to be dispensable for mRNA editing per se. The polypeptide is REH2-associated factor 2 (Trypanosoma brucei brucei (strain 927/4 GUTat10.1)).